Here is a 428-residue protein sequence, read N- to C-terminus: MKNLYLPITIDHIARVEGKGGVEIIIGDDGVKEVKLNIIEGPRFFEAITIGKKLEEALAIYPRICSFCSAAHKLTALEAAEKAVGFVPREEIQALREVLYIGDMIESHALHLYLLVLPDYRGYSSPLKMVNEYKREIEIALKLKNLGTWMMDILGSRAIHQENAVLGGFGKLPEKSVLEKMKAELREALPLAEYTFELFAKLEQYSEVEGPITHLAVKPRGDAYGIYGDYIKASDGEEFPSEKYRDYIKEFVVEHSFAKHSHYKGRPFMVGAISRVINNADLLYGKAKELYEANKDLLKGTNPFANNLAQALEIVYFIERAIDLLDEALAKWPIKPRDEVEIKDGFGVSTTEAPRGILVYALKVENGRVSYADIITPTAFNLAMMEEHVRMMAEKHYNDDPERLKILAEMVVRAYDPCISCSVHVVRL.

Ni(2+)-binding residues include Cys65, Cys68, Cys418, and Cys421. Cys68 is a binding site for Fe cation. Cys421 is a binding site for Fe cation.

The protein belongs to the [NiFe]/[NiFeSe] hydrogenase large subunit family. Heterotetramer of alpha, beta, gamma and delta subunits. The nickel-containing alpha and delta subunits constitute the hydrogenase activity. The beta and gamma subunits (flavin-containing dimer) constitute the sulfur reductase activity. Ni(2+) is required as a cofactor. It depends on Fe cation as a cofactor.

The protein localises to the cytoplasm. The catalysed reaction is H2 + NADP(+) = NADPH + H(+). Part of a bifunctional enzyme complex that functions as an NADPH-dependent hydrogen-evolving hydrogenase with sulfur-reducing activity. May play a role in hydrogen cycling during fermentative growth. Activity not exhibited with NAD. The alpha and delta subunits form the hydrogenase component that catalyzes the reduction of protons to evolve hydrogen. The protein is Sulfhydrogenase 1 subunit alpha of Pyrococcus furiosus (strain ATCC 43587 / DSM 3638 / JCM 8422 / Vc1).